A 352-amino-acid polypeptide reads, in one-letter code: MSDSLPLLLRAARGESVERPPVWMMRQAGRYMKIYRDLRDKYPSFRERSENPDLSYEISMQPFHAFKPDGVILFSDILTPLPGMGIDFDIIESKGPQIGDPIRSMAQVDALRPLNPSESMPFVGEVLGRLRQSVGNEAAVLGFVGAPWTLAAYVVEGKSSKNYAVIKAMVFREPEILHKLLDHFAESIANYLRYQIDSGAQVVQMFDSWAGQLSPADYDTFAAPYQKKVVDLVKKTHPDTPFILYISGSAGVIERMANTGVDIVSLDWTVDMAEALARLPEHIGVQGNVDPGLLFGTPEAIEARIDDCVRKARGRKHILNLGHGILPGTPEENGEAFFRAGKSVMDRLGAVV.

Substrate is bound by residues 26 to 30, Asp-76, Tyr-153, Ser-208, and His-323; that span reads RQAGR.

Belongs to the uroporphyrinogen decarboxylase family. Homodimer.

It localises to the cytoplasm. The enzyme catalyses uroporphyrinogen III + 4 H(+) = coproporphyrinogen III + 4 CO2. It participates in porphyrin-containing compound metabolism; protoporphyrin-IX biosynthesis; coproporphyrinogen-III from 5-aminolevulinate: step 4/4. Functionally, catalyzes the decarboxylation of four acetate groups of uroporphyrinogen-III to yield coproporphyrinogen-III. The chain is Uroporphyrinogen decarboxylase from Synechococcus sp. (strain CC9605).